A 303-amino-acid chain; its full sequence is Taste receptor type 2 member 13 (303 aa).

Topologically, residues 1 to 7 are extracellular; sequence MESALPS. The helical transmembrane segment at 8-28 threads the bilayer; it reads IFTLVIIAEFIIGNLSNGFIV. The Cytoplasmic portion of the chain corresponds to 29-55; the sequence is LINCIDWVSKRELSSVDKLLIILAISR. Residues 56–76 form a helical membrane-spanning segment; sequence IGLIWEILVSWFLALHSLAIF. The Extracellular portion of the chain corresponds to 77 to 85; the sequence is VSGTGLRIM. Residues 86–106 form a helical membrane-spanning segment; it reads IFSWIVSNHFNLWLATILSIF. Over 107–128 the chain is Cytoplasmic; sequence YLLKIASFSSPAFLYLKRRVNK. Residues 129 to 149 form a helical membrane-spanning segment; the sequence is VILMILLGTLVFLFLNLIQIN. The Extracellular portion of the chain corresponds to 150 to 184; that stretch reads MLIKDWLDRYERNTTWNFSMSDFETFSVSVRFTMT. N-linked (GlcNAc...) asparagine glycosylation is found at Asn162 and Asn166. A helical transmembrane segment spans residues 185–205; it reads MFSLTPFTVAFISFLLLVFSL. At 206–232 the chain is on the cytoplasmic side; that stretch reads QKHLQKMQLNYKGHRDPRTKVHTNALK. Residues 233–253 traverse the membrane as a helical segment; it reads IVISFLLLYASFFLSILISWI. Residues 254-261 are Extracellular-facing; the sequence is SELYQNTV. Residues 262-282 form a helical membrane-spanning segment; it reads IYMLCETIGAFYPSSHSFLLI. Topologically, residues 283–303 are cytoplasmic; the sequence is LGNAKLRQAFLLVAAKVWAKR.

It belongs to the G-protein coupled receptor T2R family.

It localises to the membrane. Its function is as follows. Receptor that may play a role in the perception of bitterness and is gustducin-linked. May play a role in sensing the chemical composition of the gastrointestinal content. The activity of this receptor may stimulate alpha gustducin, mediate PLC-beta-2 activation and lead to the gating of TRPM5. In Pan troglodytes (Chimpanzee), this protein is Taste receptor type 2 member 13 (TAS2R13).